The chain runs to 132 residues: Riboflavin kinase (132 aa).

A CDP-binding site is contributed by 10–15 (GLGEGR). Mg(2+) is bound by residues Thr-39 and Asn-41. FMN is bound by residues Thr-95, Tyr-96, and Glu-103. 108-111 (MKLR) serves as a coordination point for CDP.

As to quaternary structure, monomer. Mg(2+) serves as cofactor.

The catalysed reaction is riboflavin + CTP = CDP + FMN + H(+). It participates in cofactor biosynthesis; FMN biosynthesis; FMN from riboflavin (CTP route): step 1/1. Catalyzes the CTP-dependent phosphorylation of riboflavin (vitamin B2) to form flavin mononucleotide (FMN). Can also utilize UTP as the phosphate donor, although less efficiently, and it is unclear if ATP and GTP can also serve as substrates or not. The sequence is that of Riboflavin kinase (ribK) from Methanocaldococcus jannaschii (strain ATCC 43067 / DSM 2661 / JAL-1 / JCM 10045 / NBRC 100440) (Methanococcus jannaschii).